Consider the following 466-residue polypeptide: Asparagine--tRNA ligase (466 aa).

It belongs to the class-II aminoacyl-tRNA synthetase family. In terms of assembly, homodimer.

The protein localises to the cytoplasm. The catalysed reaction is tRNA(Asn) + L-asparagine + ATP = L-asparaginyl-tRNA(Asn) + AMP + diphosphate + H(+). The polypeptide is Asparagine--tRNA ligase (Photorhabdus laumondii subsp. laumondii (strain DSM 15139 / CIP 105565 / TT01) (Photorhabdus luminescens subsp. laumondii)).